Here is a 346-residue protein sequence, read N- to C-terminus: [LysW]-lysine/[LysW]-ornithine hydrolase (346 aa).

H68 lines the Zn(2+) pocket. D70 is a catalytic residue. Residue D92 coordinates Zn(2+). Residue E122 is the Proton acceptor of the active site. Residues E123, E146, and H317 each coordinate Zn(2+).

Belongs to the peptidase M20A family. LysK subfamily. Zn(2+) is required as a cofactor. Requires Co(2+) as cofactor.

Its subcellular location is the cytoplasm. It carries out the reaction [amino-group carrier protein]-C-terminal-gamma-(L-lysyl)-L-glutamate + H2O = [amino-group carrier protein]-C-terminal-L-glutamate + L-lysine. The catalysed reaction is [amino-group carrier protein]-C-terminal-gamma-(L-ornithyl)-L-glutamate + H2O = [amino-group carrier protein]-C-terminal-L-glutamate + L-ornithine. It functions in the pathway amino-acid biosynthesis; L-lysine biosynthesis via AAA pathway; L-lysine from L-alpha-aminoadipate (Thermus route): step 5/5. Its pathway is amino-acid biosynthesis; L-arginine biosynthesis. In terms of biological role, catalyzes the release of L-lysine from [LysW]-gamma-L-lysine and the release of L-ornithine from [LysW]-L-ornithine. The protein is [LysW]-lysine/[LysW]-ornithine hydrolase of Saccharolobus islandicus (strain M.16.27) (Sulfolobus islandicus).